A 278-amino-acid chain; its full sequence is Dermonecrotic toxin LspiSicTox-betaIE2ii (278 aa).

Residue histidine 5 is part of the active site. Positions 25 and 27 each coordinate Mg(2+). Catalysis depends on histidine 41, which acts as the Nucleophile. 2 disulfide bridges follow: cysteine 45/cysteine 51 and cysteine 47/cysteine 190. Aspartate 85 is a binding site for Mg(2+).

This sequence belongs to the arthropod phospholipase D family. Class II subfamily. Mg(2+) is required as a cofactor. In terms of tissue distribution, expressed by the venom gland.

The protein localises to the secreted. The enzyme catalyses an N-(acyl)-sphingosylphosphocholine = an N-(acyl)-sphingosyl-1,3-cyclic phosphate + choline. It catalyses the reaction an N-(acyl)-sphingosylphosphoethanolamine = an N-(acyl)-sphingosyl-1,3-cyclic phosphate + ethanolamine. The catalysed reaction is a 1-acyl-sn-glycero-3-phosphocholine = a 1-acyl-sn-glycero-2,3-cyclic phosphate + choline. It carries out the reaction a 1-acyl-sn-glycero-3-phosphoethanolamine = a 1-acyl-sn-glycero-2,3-cyclic phosphate + ethanolamine. In terms of biological role, dermonecrotic toxins cleave the phosphodiester linkage between the phosphate and headgroup of certain phospholipids (sphingolipid and lysolipid substrates), forming an alcohol (often choline) and a cyclic phosphate. This toxin acts on sphingomyelin (SM). It may also act on ceramide phosphoethanolamine (CPE), lysophosphatidylcholine (LPC) and lysophosphatidylethanolamine (LPE), but not on lysophosphatidylserine (LPS), and lysophosphatidylglycerol (LPG). It acts by transphosphatidylation, releasing exclusively cyclic phosphate products as second products. Induces dermonecrosis, hemolysis, increased vascular permeability, edema, inflammatory response, and platelet aggregation. This chain is Dermonecrotic toxin LspiSicTox-betaIE2ii, found in Loxosceles spinulosa (Recluse spider).